A 428-amino-acid polypeptide reads, in one-letter code: Tyrosine--tRNA ligase (428 aa).

Tyrosine 41 lines the L-tyrosine pocket. The short motif at 46–55 (PTADSLHLGH) is the 'HIGH' region element. L-tyrosine contacts are provided by tyrosine 179 and glutamine 183. The 'KMSKS' region signature appears at 239 to 243 (KFGKT). Lysine 242 is a binding site for ATP. Positions 361-418 (ADLLQALVDSELQPSRGQARKTVASNAVTINGEKQADPEYVFSDSDRLFGRYTLLRRG) constitute an S4 RNA-binding domain.

This sequence belongs to the class-I aminoacyl-tRNA synthetase family. TyrS type 1 subfamily. Homodimer.

It is found in the cytoplasm. It carries out the reaction tRNA(Tyr) + L-tyrosine + ATP = L-tyrosyl-tRNA(Tyr) + AMP + diphosphate + H(+). Catalyzes the attachment of tyrosine to tRNA(Tyr) in a two-step reaction: tyrosine is first activated by ATP to form Tyr-AMP and then transferred to the acceptor end of tRNA(Tyr). The sequence is that of Tyrosine--tRNA ligase from Klebsiella pneumoniae subsp. pneumoniae (strain ATCC 700721 / MGH 78578).